Here is a 1019-residue protein sequence, read N- to C-terminus: Insulin-degrading enzyme (1019 aa).

His-108 serves as a coordination point for Zn(2+). Catalysis depends on Glu-111, which acts as the Proton acceptor. The Zn(2+) site is built by His-112 and Glu-189. At Lys-192 the chain carries N6-succinyllysine. Substrate contacts are provided by residues 336–342 and 359–363; these read HLIGHEG and LVGGQ. Arg-429 lines the ATP pocket. The residue at position 697 (Lys-697) is an N6-succinyllysine. Residues 853-858 carry the SlyX motif motif; sequence EKPPHY. Residue 895–901 coordinates ATP; that stretch reads DKPKKLS.

It belongs to the peptidase M16 family. As to quaternary structure, homodimer. Can also form homotetramers. In terms of assembly, (Microbial infection) Interacts (via N-terminus) with varicella-zoster virus (VZV) envelope glycoprotein E (via N-terminus); the membrane-associated isoform may function as an entry receptor for this virus. Requires Zn(2+) as cofactor. In terms of processing, the N-terminus is blocked. Detected in brain and in cerebrospinal fluid (at protein level).

It localises to the cytoplasm. It is found in the cytosol. The protein resides in the cell membrane. The protein localises to the secreted. The catalysed reaction is Degradation of insulin, glucagon and other polypeptides. No action on proteins.. Its activity is regulated as follows. Activated by small peptides. Activated by ATP and GTP, and to a lesser extent by CTP, TTP and PPPi. Inhibited by bacitracin. In vitro modification of Cys residues impairs enzyme activity. In terms of biological role, plays a role in the cellular breakdown of insulin, APP peptides, IAPP peptides, natriuretic peptides, glucagon, bradykinin, kallidin, and other peptides, and thereby plays a role in intercellular peptide signaling. Substrate binding induces important conformation changes, making it possible to bind and degrade larger substrates, such as insulin. Contributes to the regulation of peptide hormone signaling cascades and regulation of blood glucose homeostasis via its role in the degradation of insulin, glucagon and IAPP. Plays a role in the degradation and clearance of APP-derived amyloidogenic peptides that are secreted by neurons and microglia. Degrades the natriuretic peptides ANP, BNP and CNP, inactivating their ability to raise intracellular cGMP. Also degrades an aberrant frameshifted 40-residue form of NPPA (fsNPPA) which is associated with familial atrial fibrillation in heterozygous patients. Involved in antigen processing. Produces both the N terminus and the C terminus of MAGEA3-derived antigenic peptide (EVDPIGHLY) that is presented to cytotoxic T lymphocytes by MHC class I. (Microbial infection) The membrane-associated isoform acts as an entry receptor for varicella-zoster virus (VZV). This is Insulin-degrading enzyme from Homo sapiens (Human).